The primary structure comprises 102 residues: EPIDERMAL PATTERNING FACTOR-like protein 9 (102 aa).

The N-terminal stretch at 1-31 is a signal peptide; sequence MKHEMMNIKPRCITIFFLLFALLLGNYVVQA. Cystine bridges form between cysteine 65–cysteine 98, cysteine 70–cysteine 77, and cysteine 73–cysteine 100.

The protein belongs to the plant cysteine rich small secretory peptide family. Epidermal patterning factor subfamily. Interacts with ERECTA and TMM. In terms of tissue distribution, expressed in immature organs, including leaves, stems and flower buds, but not in roots, shoot apical meristem and petals. Detected in the mesophyll tissues but not in the epidermal tissues where stomata develop.

The protein localises to the secreted. Its subcellular location is the extracellular space. It is found in the apoplast. Functionally, positively regulates stomatal density and patterning. Acts by competing with EPF2 (AC Q8LC53) for the same receptors, ERECTA (AC Q42371) and TMM (AC Q9SSD1). Not cleaved by the protease CRSP (AC Q9LNU1). This is EPIDERMAL PATTERNING FACTOR-like protein 9 from Arabidopsis thaliana (Mouse-ear cress).